The chain runs to 489 residues: MKTNQQPKAVIVIFGATGDLAKRKLYPSIHRLYQNGQIGEEFAVVGVGRRPWSNEDLRQTVKTSISSSADKHIDDFTSHFYYHPFDVTNPGSYQELNVLLNQLEDTYQIPNNRMFYLAMAPEFFGTIAKTLKSEGVTATTGWSRLVIEKPFGHDLPSAQALNKEIREAFTEDQIYRIDHYLGKQMVQNIEVIRFANAIFEPLWTNRYISNIQITSSESLGVEDRARYYEKSGALRDMVQNHIMQMVALLAMEPPIKLNTEEIRSEKVKVLRALRPIAKDEVDEYFVRGQYHAGEIDGVPVPAYTDEDNVAPDSNTETFVAGKLLIDNFRWAGVPFYIRTGKRMKEKSTKIVVQFKDIPMNLYYGNENNMNPNLLVIHIQPDEGITLYLNAKKLGGAAHAQPIKLDYCSNCNDELNTPEAYEKLIHDCLLGDATNFAHWDEVALSWSFVDSISETWAANKTLSPNYESGSMGPKESDDLLVKDGLHWWNI.

NADP(+)-binding positions include 15 to 22 (GATGDLAK), arginine 49, 86 to 87 (DV), and lysine 149. Residues histidine 179, lysine 183, glutamate 217, and aspartate 236 each contribute to the substrate site. Histidine 241 acts as the Proton acceptor in catalysis. The substrate site is built by lysine 341 and lysine 346.

The protein belongs to the glucose-6-phosphate dehydrogenase family.

It catalyses the reaction D-glucose 6-phosphate + NADP(+) = 6-phospho-D-glucono-1,5-lactone + NADPH + H(+). Its pathway is carbohydrate degradation; pentose phosphate pathway; D-ribulose 5-phosphate from D-glucose 6-phosphate (oxidative stage): step 1/3. Catalyzes the oxidation of glucose 6-phosphate to 6-phosphogluconolactone. This chain is Glucose-6-phosphate 1-dehydrogenase, found in Bacillus subtilis (strain 168).